The sequence spans 935 residues: Transmembrane channel-like protein 1 (935 aa).

Disordered stretches follow at residues 1–21 (MPRH…DEGK) and 37–204 (ERGK…LGSL). Composition is skewed to basic and acidic residues over residues 37-47 (ERGKIKQASRD), 54-79 (RNGE…EKKH), 109-136 (DKSS…EKDV), 152-163 (NHEKTKQHLKEE), and 172-184 (PETT…KSES). The next 10 membrane-spanning stretches (helical) occupy residues 303-340 (SSVA…MGKP), 392-423 (RMPL…ANEE), 480-510 (LTRF…VRRS), 523-550 (WWER…ISTL), 555-589 (PRIA…QLKR), 633-670 (WETM…VRFL), 690-710 (VSGN…GAFY), 714-736 (LPAL…VMCC), 751-774 (NFYM…TIVS), and 818-851 (LVLP…KKKL). Positions 874–886 (EQARKAGEQRRNS) are enriched in basic and acidic residues. The disordered stretch occupies residues 874–935 (EQARKAGEQR…QQPQKNSKKR (62 aa)). 2 stretches are compositionally biased toward polar residues: residues 899–919 (SHVS…TSSG) and 926–935 (QQPQKNSKKR).

Belongs to the TMC family. Interacts specifically with isoform CD3 of PCDH15A (via cytoplasmic domain). As to expression, in adults, expression is restricted to the hair cells of inner ear and lateral line organ. Expressed at higher levels in the larval lateral-line neuromasts than in the larval inner ear. Expressed in the sensory hair cell patches of the ear at 4 days post fertilization (dpf).

The protein localises to the cell membrane. The enzyme catalyses Ca(2+)(in) = Ca(2+)(out). Its function is as follows. Pore-forming subunit of the mechanotransducer (MET) non-selective cation channel complex located at the tips of hair-cell stereocilia. Highly permeable to calcium and likely transports monovalent cations. This Danio rerio (Zebrafish) protein is Transmembrane channel-like protein 1.